The chain runs to 87 residues: MKKLLLLLILLIFAAKVTAEEWAGADEKAEEVIKELKPDYEPWFSPIFEPPSGEIESMLFSLQAAIGSLIIGYFLGYYRGLKHARNA.

The next 2 membrane-spanning stretches (helical) occupy residues 4 to 24 (LLLL…EWAG) and 58 to 78 (MLFS…LGYY).

This sequence belongs to the CbiN family. In terms of assembly, forms an energy-coupling factor (ECF) transporter complex composed of an ATP-binding protein (A component, CbiO), a transmembrane protein (T component, CbiQ) and 2 possible substrate-capture proteins (S components, CbiM and CbiN) of unknown stoichimetry.

The protein localises to the cell membrane. The protein operates within cofactor biosynthesis; adenosylcobalamin biosynthesis. In terms of biological role, part of the energy-coupling factor (ECF) transporter complex CbiMNOQ involved in cobalt import. This Archaeoglobus fulgidus (strain ATCC 49558 / DSM 4304 / JCM 9628 / NBRC 100126 / VC-16) protein is Cobalt transport protein CbiN.